The sequence spans 79 residues: MVTIRLARGGSKKRPFYHLNVTDSRNARDGRFIERVGFFNPTARGNDERIRVDAERLQFWVERGAQMSDRVRDLVKASA.

This sequence belongs to the bacterial ribosomal protein bS16 family.

This chain is Small ribosomal subunit protein bS16, found in Hahella chejuensis (strain KCTC 2396).